Reading from the N-terminus, the 719-residue chain is B3 domain-containing protein Os03g0120900 (719 aa).

The segment at residues 7–110 (HHHFIKVMVG…HFMVLPFGLN (104 aa)) is a DNA-binding region (TF-B3). Disordered stretches follow at residues 328–381 (RGSF…RSEQ) and 412–443 (EEPQ…RNAV). Basic and acidic residues predominate over residues 351–366 (DSAENTLKERSEERQP). Residues 416–430 (HNQGENEGNLDQVNN) show a composition bias toward polar residues.

It is found in the nucleus. This Oryza sativa subsp. japonica (Rice) protein is B3 domain-containing protein Os03g0120900.